Consider the following 311-residue polypeptide: Ciliary microtubule inner protein 2B (311 aa).

2 disordered regions span residues 64–93 (PFPPAPRGHSYNEASQELGGRRRRQRLGDP) and 150–183 (QEGRQPQTEHEKQLLTARHRTPLPALSKEPAPFM).

This sequence belongs to the CIMIP2 family. Expressed in airway epithelial cells.

It is found in the cytoplasm. The protein resides in the cytoskeleton. It localises to the cilium axoneme. Functionally, microtubule inner protein (MIP) part of the dynein-decorated doublet microtubules (DMTs) in cilia axoneme, which is required for motile cilia beating. This Xenopus laevis (African clawed frog) protein is Ciliary microtubule inner protein 2B (cimip2b).